We begin with the raw amino-acid sequence, 679 residues long: Kelch-like protein diablo (679 aa).

A compositionally biased stretch (gly residues) spans 1 to 48 (MGDLPGGGGGAAGGAGAAGGGGGGGNGAAGSSSSGGGASGSGGGGPGS). A disordered region spans residues 1–84 (MGDLPGGGGG…RLSHTSEKHP (84 aa)). The BTB domain maps to 101–168 (CDVVLNVGGR…CYTAHIIVEE (68 aa)). Positions 203–305 (CLGIRAFADT…SPKFLVGTVG (103 aa)) constitute a BACK domain. Kelch repeat units lie at residues 352–398 (VLFA…VLND), 400–446 (LYAV…VLDG), 447–493 (FLYA…VLGG), 495–540 (LYAI…VFNN), 542–587 (IYAV…VVNG), and 588–634 (QLYA…VMRA). Residues 643-679 (CDNNSSNNNNNNYNLKHQQQQPQQQQQQQQQQTQQQL) are disordered. Low complexity predominate over residues 645 to 679 (NNSSNNNNNNYNLKHQQQQPQQQQQQQQQQTQQQL).

The protein operates within protein modification; protein ubiquitination. Probable substrate-specific adapter of an E3 ubiquitin-protein ligase complex which mediates the ubiquitination and subsequent proteasomal degradation of target proteins. May have a role in synapse differentiation and growth. The sequence is that of Kelch-like protein diablo from Drosophila willistoni (Fruit fly).